The following is a 356-amino-acid chain: Holliday junction branch migration complex subunit RuvB (356 aa).

The segment at 4–191 is large ATPase domain (RuvB-L); that stretch reads TDKLATEQRI…FGIVARLEFY (188 aa). ATP contacts are provided by residues Leu-30, Arg-31, Gly-72, Lys-75, Thr-76, Thr-77, 138–140, Arg-181, Tyr-191, and Arg-228; that span reads EDY. Thr-76 lines the Mg(2+) pocket. The interval 192–262 is small ATPAse domain (RuvB-S); that stretch reads DADQLSRIVR…VADAALAMLD (71 aa). The tract at residues 265 to 356 is head domain (RuvB-H); that stretch reads PVGFDLMDRK…RDEWDTPDGK (92 aa). Positions 301, 320, and 325 each coordinate DNA.

This sequence belongs to the RuvB family. Homohexamer. Forms an RuvA(8)-RuvB(12)-Holliday junction (HJ) complex. HJ DNA is sandwiched between 2 RuvA tetramers; dsDNA enters through RuvA and exits via RuvB. An RuvB hexamer assembles on each DNA strand where it exits the tetramer. Each RuvB hexamer is contacted by two RuvA subunits (via domain III) on 2 adjacent RuvB subunits; this complex drives branch migration. In the full resolvosome a probable DNA-RuvA(4)-RuvB(12)-RuvC(2) complex forms which resolves the HJ.

It is found in the cytoplasm. It catalyses the reaction ATP + H2O = ADP + phosphate + H(+). The RuvA-RuvB-RuvC complex processes Holliday junction (HJ) DNA during genetic recombination and DNA repair, while the RuvA-RuvB complex plays an important role in the rescue of blocked DNA replication forks via replication fork reversal (RFR). RuvA specifically binds to HJ cruciform DNA, conferring on it an open structure. The RuvB hexamer acts as an ATP-dependent pump, pulling dsDNA into and through the RuvAB complex. RuvB forms 2 homohexamers on either side of HJ DNA bound by 1 or 2 RuvA tetramers; 4 subunits per hexamer contact DNA at a time. Coordinated motions by a converter formed by DNA-disengaged RuvB subunits stimulates ATP hydrolysis and nucleotide exchange. Immobilization of the converter enables RuvB to convert the ATP-contained energy into a lever motion, pulling 2 nucleotides of DNA out of the RuvA tetramer per ATP hydrolyzed, thus driving DNA branch migration. The RuvB motors rotate together with the DNA substrate, which together with the progressing nucleotide cycle form the mechanistic basis for DNA recombination by continuous HJ branch migration. Branch migration allows RuvC to scan DNA until it finds its consensus sequence, where it cleaves and resolves cruciform DNA. This is Holliday junction branch migration complex subunit RuvB from Burkholderia cenocepacia (strain ATCC BAA-245 / DSM 16553 / LMG 16656 / NCTC 13227 / J2315 / CF5610) (Burkholderia cepacia (strain J2315)).